Consider the following 66-residue polypeptide: Large ribosomal subunit protein uL29 (66 aa).

Belongs to the universal ribosomal protein uL29 family.

This Thermococcus sibiricus (strain DSM 12597 / MM 739) protein is Large ribosomal subunit protein uL29.